We begin with the raw amino-acid sequence, 1199 residues long: Tubulin-specific chaperone D (1199 aa).

Disordered regions lie at residues methionine 1–alanine 23 and glutamine 337–valine 361. A compositionally biased stretch (acidic residues) spans aspartate 14–alanine 23. HEAT repeat units lie at residues valine 368–valine 406, glutamate 603–leucine 639, alanine 757–phenylalanine 793, and glycine 1111–tyrosine 1147.

This sequence belongs to the TBCD family. As to quaternary structure, found in a complex with at least ARL2, PPP2CB, PPP2R1A, PPP2R2A, PPP2R5E and TBCD. Interacts with PPP2CB. Part of a supercomplex made of cofactors A to E. Cofactors A and D function by capturing and stabilizing tubulin in a quasi-native conformation. Cofactor E binds to the cofactor D-tubulin complex; interaction with cofactor C then causes the release of tubulin polypeptides that are committed to the native state. Interacts with ARL2; interaction is enhanced with the GDP-bound form of ARL2. Does not interact with ARL3, ARL4A and ARL4D. Interacts with beta tubulin. Interacts with TBCE.

It localises to the cell junction. The protein localises to the tight junction. The protein resides in the lateral cell membrane. Its subcellular location is the cytoplasm. It is found in the adherens junction. It localises to the cytoskeleton. The protein localises to the microtubule organizing center. The protein resides in the centrosome. In terms of biological role, tubulin-folding protein implicated in the first step of the tubulin folding pathway and required for tubulin complex assembly. Involved in the regulation of microtubule polymerization or depolymerization, it modulates microtubule dynamics by capturing GTP-bound beta-tubulin (TUBB). Its ability to interact with beta tubulin is regulated via its interaction with ARL2. Acts as a GTPase-activating protein (GAP) for ARL2. Induces microtubule disruption in absence of ARL2. Increases degradation of beta tubulin, when overexpressed in polarized cells. Promotes epithelial cell detachment, a process antagonized by ARL2. Induces tight adherens and tight junctions disassembly at the lateral cell membrane. Required for correct assembly and maintenance of the mitotic spindle, and proper progression of mitosis. Involved in neuron morphogenesis. The chain is Tubulin-specific chaperone D (TBCD) from Bos taurus (Bovine).